The primary structure comprises 94 residues: ESAT-6-like protein EsxN (94 aa).

This sequence belongs to the WXG100 family. ESAT-6 subfamily.

The protein resides in the secreted. In Mycobacterium bovis (strain ATCC BAA-935 / AF2122/97), this protein is ESAT-6-like protein EsxN.